The primary structure comprises 164 residues: uncharacterized protein (164 aa).

The segment at 1–77 is disordered; that stretch reads MGQKKTMGTE…PCSIRDAPFH (77 aa).

This is an uncharacterized protein from Homo sapiens (Human).